We begin with the raw amino-acid sequence, 409 residues long: MKEQVIERLIRYAKIDTQSDFTSETTPSTPKQFDLLHVLKDELATIGLTDITLDENGYLFATLEANTDKDVPTIGFLAHVDTTTDFTGTNVNPQRLDNYDGGDIQLNENLVMSPADFPELQNYIGQTLITTDGTTLLGADDKAGIAEIITAMEYLIQNPSIKHGKLRVAFTPDEEIGRGPHKFDVAAFGADYAYTMDGGPLGELQYESFNAAGVKVITKGTSVHPGSAKNKMVNAITMAIAFQNEMPTEAVPEKTEGYEGFIHLMGFKGAIEHAELSYIVRDHDRQKFEEKKQLMQAAAAKIQAQFGEDALSITIEDQYYNMGEKIEPVKEIVDIAREAMEKLDITPITLPIRGGTDGSQLSYMGLPTPNIFAGGENMHGKFEYVSAETMEKATQVIIEIVQLFEQRAK.

Residue H79 coordinates Zn(2+). D81 is a catalytic residue. D140 lines the Zn(2+) pocket. The Proton acceptor role is filled by E174. 3 residues coordinate Zn(2+): E175, D197, and H379.

The protein belongs to the peptidase M20B family. Requires Zn(2+) as cofactor.

The protein resides in the cytoplasm. The catalysed reaction is Release of the N-terminal residue from a tripeptide.. In terms of biological role, cleaves the N-terminal amino acid of tripeptides. The sequence is that of Peptidase T from Lysinibacillus sphaericus (strain C3-41).